The chain runs to 127 residues: uncharacterized protein (127 aa).

2 consecutive transmembrane segments (helical) span residues 64-84 and 101-118; these read GYYITNLICIVVGLFLYFGYL and FFHFFFTILAVTSRAIYY.

It is found in the membrane. This is an uncharacterized protein from Saccharomyces cerevisiae (strain ATCC 204508 / S288c) (Baker's yeast).